The primary structure comprises 505 residues: MFS efflux pump atnC (505 aa).

12 consecutive transmembrane segments (helical) span residues 48–68, 117–137, 148–168, 181–201, 216–236, 240–260, 304–324, 343–363, 377–399, 403–425, 439–459, and 469–489; these read VLQVILLCASATLTLDIGLTV, LIGWQTVFDGIPAIFLAIPYG, VLLLCFLGLALSTAWALLVCW, LFQCLGGGPAVATAVLEATIA, LQATVLISDILANPLSSVLMA, WTPCFLGVGIQALATVLLIAL, VAGLVFSLLILTVSAESLDFL, LSLRAVVEFGLLLVVGSLLLF, LLIARLSLGLIVAGLLILSLSPT, AILVYTLGAGFQPAIMSLLASLW, TVAIILAVGGVISGPLISLMY, and WVGLPYFVASGLCAGIAGVLL.

This sequence belongs to the major facilitator superfamily.

It localises to the membrane. It participates in secondary metabolite biosynthesis. In terms of biological role, MFS efflux pump; part of the gene cluster that mediates the biosynthesis of aspercryptins, linear lipopeptides built from six amino acids including 2 highly unusual and nonproteogenic amino acids, 2-amino-octanoic acid (2aoa) and 2-amino-dodecanol (2adol). The protein is MFS efflux pump atnC of Emericella nidulans (strain FGSC A4 / ATCC 38163 / CBS 112.46 / NRRL 194 / M139) (Aspergillus nidulans).